A 149-amino-acid chain; its full sequence is Peptide deformylase (149 aa).

Fe cation is bound by residues cysteine 92 and histidine 134. Glutamate 135 is a catalytic residue. Histidine 138 is a Fe cation binding site.

The protein belongs to the polypeptide deformylase family. Requires Fe(2+) as cofactor.

It carries out the reaction N-terminal N-formyl-L-methionyl-[peptide] + H2O = N-terminal L-methionyl-[peptide] + formate. In terms of biological role, removes the formyl group from the N-terminal Met of newly synthesized proteins. Requires at least a dipeptide for an efficient rate of reaction. N-terminal L-methionine is a prerequisite for activity but the enzyme has broad specificity at other positions. The chain is Peptide deformylase from Buchnera aphidicola subsp. Cinara cedri (strain Cc).